The sequence spans 371 residues: MPVLSTAHRLPLSVERDCSREDDSLTNLQWLQDFSILSTDLSSIANSRPPLPRASQGPCSPPAGDTASCQAPRTGKQRSVAVPTAWASLPTPSPSPVQEVDYRTNANIKPPYSYATLICMAMEASQQRKLTLSAIYSWITQNFCYYRHADPSWQNSIRHNLSLNKCFMKVPRGKDEPGKGGFWQMDPRYADMFVNGVLKRRRMPASHLDPPRCNKAIAHHPYLPVSRPSSHHMQHISGGHRQSRRYEKPNPVLPALRAPERQGDALFTPEDPLQGSNFDDLDLQTALISMCWEGDLAASNLNSTLTGTSGMDMNLQDPPMQDNHWYLSTEGQQTWEQVKEEPVVEQWYNETGFVEDVLYECPPWERVETLL.

2 disordered regions span residues 45–74 and 80–99; these read ANSR…APRT and VAVP…PVQE. Residues 109–203 constitute a DNA-binding region (fork-head); that stretch reads KPPYSYATLI…VNGVLKRRRM (95 aa). Residues 228–248 form a disordered region; sequence PSSHHMQHISGGHRQSRRYEK.

It belongs to the FOXJ1 family. As to expression, expressed diffusely through much of gastrula and neurula stage embryos. At stage 23 (late neurula), limited to the otic vesicle. By stage 28 (tailbud), also expressed transiently in the presumptive nephrostomes of the pronephros. At stage 35 (early tadpole), expressed broadly in the head and strongly expressed in the developing gill structures.

It is found in the nucleus. Functionally, key transcription factor required for motile ciliogenesis. Activates genes essential for motile cilia formation and function. This Xenopus tropicalis (Western clawed frog) protein is Forkhead box protein J1.2.